Reading from the N-terminus, the 409-residue chain is Putative lipoate-protein ligase A (409 aa).

One can recognise a BPL/LPL catalytic domain in the interval 146–330 (GPDNCRLLFY…RFQKTFKVDG (185 aa)). ATP contacts are provided by residues Arg188, 193–196 (GTVL), and Lys249. Residue Lys249 coordinates (R)-lipoate.

Belongs to the LplA family. In terms of assembly, monomer.

It catalyses the reaction L-lysyl-[lipoyl-carrier protein] + (R)-lipoate + ATP = N(6)-[(R)-lipoyl]-L-lysyl-[lipoyl-carrier protein] + AMP + diphosphate + H(+). It functions in the pathway protein modification; protein lipoylation via exogenous pathway; protein N(6)-(lipoyl)lysine from lipoate: step 1/2. Its pathway is protein modification; protein lipoylation via exogenous pathway; protein N(6)-(lipoyl)lysine from lipoate: step 2/2. Functionally, catalyzes both the ATP-dependent activation of exogenously supplied lipoate to lipoyl-AMP and the transfer of the activated lipoyl onto the lipoyl domains of lipoate-dependent enzymes. This is Putative lipoate-protein ligase A (AIM22) from Saccharomyces cerevisiae (strain RM11-1a) (Baker's yeast).